A 132-amino-acid chain; its full sequence is ATP synthase epsilon chain (132 aa).

This sequence belongs to the ATPase epsilon chain family. F-type ATPases have 2 components, CF(1) - the catalytic core - and CF(0) - the membrane proton channel. CF(1) has five subunits: alpha(3), beta(3), gamma(1), delta(1), epsilon(1). CF(0) has three main subunits: a, b and c.

Its subcellular location is the cell inner membrane. Produces ATP from ADP in the presence of a proton gradient across the membrane. This is ATP synthase epsilon chain from Anaeromyxobacter dehalogenans (strain 2CP-1 / ATCC BAA-258).